We begin with the raw amino-acid sequence, 754 residues long: Ribonucleoside-diphosphate reductase subunit alpha (754 aa).

The ATP-cone domain maps to 4 to 93 (INVIKSSGVS…MFALRKHVYG (90 aa)). Substrate is bound by residues Thr-206, 221–222 (SC), Gly-250, 435–439 (NLCCE), and 615–619 (PCESS). A disulfide bridge links Cys-222 with Cys-457. The Proton acceptor role is filled by Asn-435. The active-site Cysteine radical intermediate is Cys-437. Glu-439 functions as the Proton acceptor in the catalytic mechanism. Residues 621-641 (QVSNSTNGYEPPRGPVSVKES) form a disordered region.

The protein belongs to the ribonucleoside diphosphate reductase large chain family. As to quaternary structure, heterodimer of a large and a small subunit.

The enzyme catalyses a 2'-deoxyribonucleoside 5'-diphosphate + [thioredoxin]-disulfide + H2O = a ribonucleoside 5'-diphosphate + [thioredoxin]-dithiol. Its activity is regulated as follows. Under complex allosteric control mediated by deoxynucleoside triphosphates and ATP binding. The type of nucleotide bound at the specificity site determines substrate preference. It seems probable that ATP makes the enzyme reduce CDP and UDP, dGTP favors ADP reduction and dTTP favors GDP reduction. Its function is as follows. Provides the precursors necessary for DNA synthesis. Catalyzes the biosynthesis of deoxyribonucleotides from the corresponding ribonucleotides. In Escherichia coli (Bacteriophage T4), this protein is Ribonucleoside-diphosphate reductase subunit alpha (NRDA).